Consider the following 407-residue polypeptide: Peptidase T (407 aa).

Histidine 78 contacts Zn(2+). Residue aspartate 80 is part of the active site. Position 139 (aspartate 139) interacts with Zn(2+). Catalysis depends on glutamate 173, which acts as the Proton acceptor. Residues glutamate 174, aspartate 196, and histidine 378 each contribute to the Zn(2+) site.

Belongs to the peptidase M20B family. Zn(2+) serves as cofactor.

It is found in the cytoplasm. It carries out the reaction Release of the N-terminal residue from a tripeptide.. In terms of biological role, cleaves the N-terminal amino acid of tripeptides. The polypeptide is Peptidase T (Shewanella halifaxensis (strain HAW-EB4)).